A 530-amino-acid chain; its full sequence is Copine-D (530 aa).

C2 domains lie at methionine 1–methionine 122 and leucine 130–isoleucine 248. Aspartate 25, aspartate 31, aspartate 85, aspartate 87, and aspartate 100 together coordinate Ca(2+). Positions asparagine 289–isoleucine 507 constitute a VWFA domain.

It belongs to the copine family. Ca(2+) is required as a cofactor.

This Dictyostelium discoideum (Social amoeba) protein is Copine-D (cpnD).